A 97-amino-acid chain; its full sequence is Citrate lyase acyl carrier protein (97 aa).

Serine 14 carries the post-translational modification O-(phosphoribosyl dephospho-coenzyme A)serine.

The protein belongs to the CitD family. As to quaternary structure, oligomer with a subunit composition of (alpha,beta,gamma)6.

Its subcellular location is the cytoplasm. Covalent carrier of the coenzyme of citrate lyase. This is Citrate lyase acyl carrier protein from Lactobacillus helveticus (strain DPC 4571).